The primary structure comprises 134 residues: Z-ring associated protein G (134 aa).

Residues 7-27 (EIWVAIGIAFIVGLFIGYIIV) traverse the membrane as a helical segment. Residues 107–134 (ATDKSQNEQPRDYSEGASGLFKENKEEN) are disordered. The segment covering 111–120 (SQNEQPRDYS) has biased composition (basic and acidic residues).

This sequence belongs to the ZapG family.

Its subcellular location is the cell inner membrane. Involved in cell division, cell envelope biogenesis and cell shape maintenance. In Haemophilus influenzae (strain ATCC 51907 / DSM 11121 / KW20 / Rd), this protein is Z-ring associated protein G.